The chain runs to 455 residues: Glycosyl hydrolase family 109 protein (455 aa).

Residues 1 to 33 (MAGIDRRGFLKASMASVAAAALAGCASQQGTSA) constitute a signal peptide (tat-type signal). Residues 62 to 63 (ER), Asp84, Gln112, 133 to 136 (WALH), 153 to 154 (EV), and Asn182 contribute to the NAD(+) site. Residues Tyr211, Arg230, 242–245 (YPTH), and Tyr324 each bind substrate. Residue Tyr242 participates in NAD(+) binding.

This sequence belongs to the Gfo/Idh/MocA family. Glycosyl hydrolase 109 subfamily. The cofactor is NAD(+). Post-translationally, predicted to be exported by the Tat system. The position of the signal peptide cleavage has not been experimentally proven.

Glycosidase. The sequence is that of Glycosyl hydrolase family 109 protein from Shewanella amazonensis (strain ATCC BAA-1098 / SB2B).